A 492-amino-acid chain; its full sequence is Probable cytochrome P450 313a3 (492 aa).

A heme-binding site is contributed by cysteine 438.

Belongs to the cytochrome P450 family. Requires heme as cofactor.

Its subcellular location is the endoplasmic reticulum membrane. The protein resides in the microsome membrane. May be involved in the metabolism of insect hormones and in the breakdown of synthetic insecticides. In Drosophila melanogaster (Fruit fly), this protein is Probable cytochrome P450 313a3 (Cyp313a3).